The chain runs to 1034 residues: Glycine dehydrogenase (decarboxylating), mitochondrial (1034 aa).

The transit peptide at 1 to 63 (MERARRLAML…LNGFGSQVRT (63 aa)) directs the protein to the mitochondrion. Position 770 is an N6-(pyridoxal phosphate)lysine (Lys-770).

It belongs to the GcvP family. As to quaternary structure, homodimer. The glycine cleavage system is composed of four proteins: P, T, L and H. The cofactor is pyridoxal 5'-phosphate.

It is found in the mitochondrion. It catalyses the reaction N(6)-[(R)-lipoyl]-L-lysyl-[glycine-cleavage complex H protein] + glycine + H(+) = N(6)-[(R)-S(8)-aminomethyldihydrolipoyl]-L-lysyl-[glycine-cleavage complex H protein] + CO2. The glycine cleavage system catalyzes the degradation of glycine. The P protein binds the alpha-amino group of glycine through its pyridoxal phosphate cofactor; CO(2) is released and the remaining methylamine moiety is then transferred to the lipoamide cofactor of the H protein. This Flaveria anomala (Yellowtops) protein is Glycine dehydrogenase (decarboxylating), mitochondrial (GDCSP).